Reading from the N-terminus, the 335-residue chain is Holliday junction branch migration complex subunit RuvB (335 aa).

The interval 1–181 (MERIVEVEKF…FGMHFRLQFY (181 aa)) is large ATPase domain (RuvB-L). Residues Leu20, Arg21, Gly62, Lys65, Thr66, Thr67, 128 to 130 (EDF), Arg171, Tyr181, and Arg218 contribute to the ATP site. Thr66 is a Mg(2+) binding site. Positions 182–252 (TPQELAQIIT…RTQKALEALG (71 aa)) are small ATPAse domain (RuvB-S). The segment at 255–335 (ERGFDELDLK…LTPNIQNSLF (81 aa)) is head domain (RuvB-H). The DNA site is built by Arg309 and Arg314.

Belongs to the RuvB family. In terms of assembly, homohexamer. Forms an RuvA(8)-RuvB(12)-Holliday junction (HJ) complex. HJ DNA is sandwiched between 2 RuvA tetramers; dsDNA enters through RuvA and exits via RuvB. An RuvB hexamer assembles on each DNA strand where it exits the tetramer. Each RuvB hexamer is contacted by two RuvA subunits (via domain III) on 2 adjacent RuvB subunits; this complex drives branch migration. In the full resolvosome a probable DNA-RuvA(4)-RuvB(12)-RuvC(2) complex forms which resolves the HJ.

It is found in the cytoplasm. It catalyses the reaction ATP + H2O = ADP + phosphate + H(+). In terms of biological role, the RuvA-RuvB-RuvC complex processes Holliday junction (HJ) DNA during genetic recombination and DNA repair, while the RuvA-RuvB complex plays an important role in the rescue of blocked DNA replication forks via replication fork reversal (RFR). RuvA specifically binds to HJ cruciform DNA, conferring on it an open structure. The RuvB hexamer acts as an ATP-dependent pump, pulling dsDNA into and through the RuvAB complex. RuvB forms 2 homohexamers on either side of HJ DNA bound by 1 or 2 RuvA tetramers; 4 subunits per hexamer contact DNA at a time. Coordinated motions by a converter formed by DNA-disengaged RuvB subunits stimulates ATP hydrolysis and nucleotide exchange. Immobilization of the converter enables RuvB to convert the ATP-contained energy into a lever motion, pulling 2 nucleotides of DNA out of the RuvA tetramer per ATP hydrolyzed, thus driving DNA branch migration. The RuvB motors rotate together with the DNA substrate, which together with the progressing nucleotide cycle form the mechanistic basis for DNA recombination by continuous HJ branch migration. Branch migration allows RuvC to scan DNA until it finds its consensus sequence, where it cleaves and resolves cruciform DNA. The protein is Holliday junction branch migration complex subunit RuvB of Nitratiruptor sp. (strain SB155-2).